The primary structure comprises 208 residues: Protein GrpE (208 aa).

The span at 1–12 (MTNKDESVEKNT) shows a compositional bias: basic and acidic residues. The disordered stretch occupies residues 1-51 (MTNKDESVEKNTESTVEETNVKQNIDDSVEQAEESKGHLQDEAIEETSDEN). Residues 13-23 (ESTVEETNVKQ) are compositionally biased toward polar residues. The span at 42–51 (EAIEETSDEN) shows a compositional bias: acidic residues.

It belongs to the GrpE family. As to quaternary structure, homodimer.

Its subcellular location is the cytoplasm. In terms of biological role, participates actively in the response to hyperosmotic and heat shock by preventing the aggregation of stress-denatured proteins, in association with DnaK and GrpE. It is the nucleotide exchange factor for DnaK and may function as a thermosensor. Unfolded proteins bind initially to DnaJ; upon interaction with the DnaJ-bound protein, DnaK hydrolyzes its bound ATP, resulting in the formation of a stable complex. GrpE releases ADP from DnaK; ATP binding to DnaK triggers the release of the substrate protein, thus completing the reaction cycle. Several rounds of ATP-dependent interactions between DnaJ, DnaK and GrpE are required for fully efficient folding. The chain is Protein GrpE from Staphylococcus aureus (strain USA300).